A 348-amino-acid polypeptide reads, in one-letter code: D-alanine--D-alanine ligase (348 aa).

An ATP-grasp domain is found at 136-344; it reads KSVFKSYNLP…LEKLVASLIE (209 aa). Position 171–226 (171–226) interacts with ATP; the sequence is NKIINYPCFIKPANLGSSVGITKAYSKEEFITGIEFAAKYDERIIVEKSIEGRELE. Asp-297, Glu-311, and Asn-313 together coordinate Mg(2+).

It belongs to the D-alanine--D-alanine ligase family. Mg(2+) serves as cofactor. The cofactor is Mn(2+).

It is found in the cytoplasm. The enzyme catalyses 2 D-alanine + ATP = D-alanyl-D-alanine + ADP + phosphate + H(+). The protein operates within cell wall biogenesis; peptidoglycan biosynthesis. In terms of biological role, cell wall formation. The chain is D-alanine--D-alanine ligase from Prochlorococcus marinus (strain NATL1A).